The chain runs to 94 residues: Pyrimidine/purine nucleoside phosphorylase (94 aa).

This sequence belongs to the nucleoside phosphorylase PpnP family.

It catalyses the reaction a purine D-ribonucleoside + phosphate = a purine nucleobase + alpha-D-ribose 1-phosphate. The enzyme catalyses adenosine + phosphate = alpha-D-ribose 1-phosphate + adenine. The catalysed reaction is cytidine + phosphate = cytosine + alpha-D-ribose 1-phosphate. It carries out the reaction guanosine + phosphate = alpha-D-ribose 1-phosphate + guanine. It catalyses the reaction inosine + phosphate = alpha-D-ribose 1-phosphate + hypoxanthine. The enzyme catalyses thymidine + phosphate = 2-deoxy-alpha-D-ribose 1-phosphate + thymine. The catalysed reaction is uridine + phosphate = alpha-D-ribose 1-phosphate + uracil. It carries out the reaction xanthosine + phosphate = alpha-D-ribose 1-phosphate + xanthine. Catalyzes the phosphorolysis of diverse nucleosides, yielding D-ribose 1-phosphate and the respective free bases. Can use uridine, adenosine, guanosine, cytidine, thymidine, inosine and xanthosine as substrates. Also catalyzes the reverse reactions. The chain is Pyrimidine/purine nucleoside phosphorylase from Vibrio campbellii (strain ATCC BAA-1116).